The chain runs to 343 residues: Holliday junction branch migration complex subunit RuvB (343 aa).

Positions 1 to 185 (MEQEDFNIRE…FGINLHLEYY (185 aa)) are large ATPase domain (RuvB-L). Residues L24, R25, G66, K69, T70, T71, 132–134 (EDY), R175, Y185, and R222 contribute to the ATP site. T70 is a binding site for Mg(2+). Residues 186–256 (DDDILSNIIR…IAQFALEALN (71 aa)) form a small ATPAse domain (RuvB-S) region. The segment at 259–343 (KYGLDEIDNK…YSSQKTLFND (85 aa)) is head domain (RuvB-H). DNA-binding residues include R314 and R319.

It belongs to the RuvB family. Homohexamer. Forms an RuvA(8)-RuvB(12)-Holliday junction (HJ) complex. HJ DNA is sandwiched between 2 RuvA tetramers; dsDNA enters through RuvA and exits via RuvB. An RuvB hexamer assembles on each DNA strand where it exits the tetramer. Each RuvB hexamer is contacted by two RuvA subunits (via domain III) on 2 adjacent RuvB subunits; this complex drives branch migration. In the full resolvosome a probable DNA-RuvA(4)-RuvB(12)-RuvC(2) complex forms which resolves the HJ.

The protein resides in the cytoplasm. It carries out the reaction ATP + H2O = ADP + phosphate + H(+). The RuvA-RuvB-RuvC complex processes Holliday junction (HJ) DNA during genetic recombination and DNA repair, while the RuvA-RuvB complex plays an important role in the rescue of blocked DNA replication forks via replication fork reversal (RFR). RuvA specifically binds to HJ cruciform DNA, conferring on it an open structure. The RuvB hexamer acts as an ATP-dependent pump, pulling dsDNA into and through the RuvAB complex. RuvB forms 2 homohexamers on either side of HJ DNA bound by 1 or 2 RuvA tetramers; 4 subunits per hexamer contact DNA at a time. Coordinated motions by a converter formed by DNA-disengaged RuvB subunits stimulates ATP hydrolysis and nucleotide exchange. Immobilization of the converter enables RuvB to convert the ATP-contained energy into a lever motion, pulling 2 nucleotides of DNA out of the RuvA tetramer per ATP hydrolyzed, thus driving DNA branch migration. The RuvB motors rotate together with the DNA substrate, which together with the progressing nucleotide cycle form the mechanistic basis for DNA recombination by continuous HJ branch migration. Branch migration allows RuvC to scan DNA until it finds its consensus sequence, where it cleaves and resolves cruciform DNA. This is Holliday junction branch migration complex subunit RuvB from Bacteroides thetaiotaomicron (strain ATCC 29148 / DSM 2079 / JCM 5827 / CCUG 10774 / NCTC 10582 / VPI-5482 / E50).